Reading from the N-terminus, the 522-residue chain is Peptide methionine sulfoxide reductase MsrA/MsrB (522 aa).

The 158-residue stretch at 17–174 (LALGACSPKI…ALALIRDPNA (158 aa)) folds into the Thioredoxin domain. An intrachain disulfide couples Cys-68 to Cys-71. Positions 199-354 (RTIYLAGGCF…PNGYCHIDIR (156 aa)) are peptide methionine sulfoxide reductase A. Residue Cys-207 is part of the active site. Residues 383–506 (DAELKRTLTE…NGASLKFIPL (124 aa)) enclose the MsrB domain. Cys-440 and Cys-495 are joined by a disulfide. Cys-495 (nucleophile) is an active-site residue.

This sequence in the N-terminal section; belongs to the thioredoxin family. It in the central section; belongs to the MsrA Met sulfoxide reductase family. In the C-terminal section; belongs to the MsrB Met sulfoxide reductase family.

The enzyme catalyses L-methionyl-[protein] + [thioredoxin]-disulfide + H2O = L-methionyl-(S)-S-oxide-[protein] + [thioredoxin]-dithiol. The catalysed reaction is [thioredoxin]-disulfide + L-methionine + H2O = L-methionine (S)-S-oxide + [thioredoxin]-dithiol. It carries out the reaction L-methionyl-[protein] + [thioredoxin]-disulfide + H2O = L-methionyl-(R)-S-oxide-[protein] + [thioredoxin]-dithiol. In terms of biological role, has an important function as a repair enzyme for proteins that have been inactivated by oxidation. Catalyzes the reversible oxidation-reduction of methionine sulfoxide in proteins to methionine. This Neisseria meningitidis serogroup A / serotype 4A (strain DSM 15465 / Z2491) protein is Peptide methionine sulfoxide reductase MsrA/MsrB (msrAB).